We begin with the raw amino-acid sequence, 409 residues long: Epoxyqueuosine reductase (409 aa).

The segment at 1 to 23 (MDRNPELAIADARPSQDGRAAPS) is disordered. The Proton donor role is filled by aspartate 178. Residues 232–261 (AAPETPGAHCGSCTRCLGACPTGAIVAPYR) enclose the 4Fe-4S ferredoxin-type domain. Residues cysteine 241, cysteine 244, cysteine 247, cysteine 251, cysteine 267, cysteine 294, cysteine 297, and cysteine 301 each coordinate [4Fe-4S] cluster.

Belongs to the QueG family. As to quaternary structure, monomer. Cob(II)alamin is required as a cofactor. It depends on [4Fe-4S] cluster as a cofactor.

It is found in the cytoplasm. The enzyme catalyses epoxyqueuosine(34) in tRNA + AH2 = queuosine(34) in tRNA + A + H2O. It functions in the pathway tRNA modification; tRNA-queuosine biosynthesis. In terms of biological role, catalyzes the conversion of epoxyqueuosine (oQ) to queuosine (Q), which is a hypermodified base found in the wobble positions of tRNA(Asp), tRNA(Asn), tRNA(His) and tRNA(Tyr). This Burkholderia pseudomallei (strain K96243) protein is Epoxyqueuosine reductase.